Here is a 504-residue protein sequence, read N- to C-terminus: MSFSVDVLANIAIELQRGIGHQDRFQRLITTLRQVLECDASALLRYDSRQFIPLAIDGLAKDVLGRRFALEGHPRLEAIARAGDVVRFPADSELPDPYDGLIPGQESLKVHACVGLPLFAGQNLIGALTLDGMQPDQFDVFSDEELRLIAALAAGALSNALLIEQLESQNMLPGDAAPFEAVKQTQMIGLSPGMTQLKKEIEIVAASDLNVLISGETGTGKELVAKAIHEASPRAVNPLVYLNCAALPESVAESELFGHVKGAFTGAISNRSGKFEMADNGTLFLDEIGELSLALQAKLLRVLQYGDIQRVGDDRSLRVDVRVLAATNRDLREEVLAGRFRADLFHRLSVFPLSVPPLRERGDDVILLAGYFCEQCRLRLGLSRVVLSAGARNLLQHYNFPGNVRELEHAIHRAVVLARATRSGDEVILEAQHFAFPDVTLPPPEAAAVPVVKQNLREATEAFQRETIRQALAQNHHNWAACARMLETDVANLHRLAKRLGLKD.

At D57 the chain carries 4-aspartylphosphate. Residues 187–416 enclose the Sigma-54 factor interaction domain; the sequence is MIGLSPGMTQ…LEHAIHRAVV (230 aa). ATP-binding positions include 215 to 222 and 278 to 287; these read GETGTGKE and ADNGTLFLDE. The H-T-H motif DNA-binding region spans 479–498; the sequence is WAACARMLETDVANLHRLAK.

Its pathway is nitrogen metabolism; nitric oxide reduction. Required for the expression of anaerobic nitric oxide (NO) reductase, acts as a transcriptional activator for at least the norVW operon. Activation also requires sigma-54. The polypeptide is Anaerobic nitric oxide reductase transcription regulator NorR (Escherichia coli O17:K52:H18 (strain UMN026 / ExPEC)).